The sequence spans 152 residues: HTH-type transcriptional regulator SlrR (152 aa).

The HTH cro/C1-type domain occupies 6 to 61 (IRLYRKRKGYSINQLAVESGVSKSYLSKIERGVHTNPSVQFLKKVSATLEVELTEL). Residues 17–36 (INQLAVESGVSKSYLSKIER) constitute a DNA-binding region (H-T-H motif). Residues 113-151 (YRNRKLTESNIEEWKALMAEAREIGLSVHEVKSFLKTKG) enclose the Sin domain.

Component of the SlrR/SlrA complex.

Its function is as follows. Represses sigma(D)-dependent flagellar genes and activate the eps and yqxM operons. Repressor activity is regulated by SlrA. Controls the initiation of biofilm formation. The chain is HTH-type transcriptional regulator SlrR (slrR) from Bacillus subtilis (strain 168).